We begin with the raw amino-acid sequence, 115 residues long: NADH-ubiquinone oxidoreductase chain 3 (115 aa).

The next 3 membrane-spanning stretches (helical) occupy residues 4 to 24, 55 to 75, and 86 to 106; these read LTAL…AFWL, FFLV…LLPL, and VMML…AYEW.

It belongs to the complex I subunit 3 family. Core subunit of respiratory chain NADH dehydrogenase (Complex I) which is composed of 45 different subunits. Interacts with TMEM186. Interacts with TMEM242.

Its subcellular location is the mitochondrion inner membrane. It catalyses the reaction a ubiquinone + NADH + 5 H(+)(in) = a ubiquinol + NAD(+) + 4 H(+)(out). Functionally, core subunit of the mitochondrial membrane respiratory chain NADH dehydrogenase (Complex I) which catalyzes electron transfer from NADH through the respiratory chain, using ubiquinone as an electron acceptor. Essential for the catalytic activity of complex I. The polypeptide is NADH-ubiquinone oxidoreductase chain 3 (Isthmomys pirrensis (Mount Pirri Isthmus rat)).